The primary structure comprises 255 residues: tRNA (guanine-N(1)-)-methyltransferase (255 aa).

S-adenosyl-L-methionine-binding positions include glycine 113 and 133 to 138 (IGDYVL).

This sequence belongs to the RNA methyltransferase TrmD family. As to quaternary structure, homodimer.

It is found in the cytoplasm. The catalysed reaction is guanosine(37) in tRNA + S-adenosyl-L-methionine = N(1)-methylguanosine(37) in tRNA + S-adenosyl-L-homocysteine + H(+). Functionally, specifically methylates guanosine-37 in various tRNAs. The polypeptide is tRNA (guanine-N(1)-)-methyltransferase (Escherichia fergusonii (strain ATCC 35469 / DSM 13698 / CCUG 18766 / IAM 14443 / JCM 21226 / LMG 7866 / NBRC 102419 / NCTC 12128 / CDC 0568-73)).